The primary structure comprises 337 residues: GTPase Obg (337 aa).

Residues 1 to 159 (MKFVDSASIF…LMLNMELKLM (159 aa)) enclose the Obg domain. The OBG-type G domain occupies 160–323 (ADVGLVGFPN…LKDELWREVS (164 aa)). Residues 166–173 (GFPNAGKS), 191–195 (FTTLV), 213–216 (DIPG), 280–283 (TKMD), and 304–306 (SAV) each bind GTP. Ser173 and Thr193 together coordinate Mg(2+).

Belongs to the TRAFAC class OBG-HflX-like GTPase superfamily. OBG GTPase family. As to quaternary structure, monomer. The cofactor is Mg(2+).

The protein localises to the cytoplasm. In terms of biological role, an essential GTPase which binds GTP, GDP and possibly (p)ppGpp with moderate affinity, with high nucleotide exchange rates and a fairly low GTP hydrolysis rate. Plays a role in control of the cell cycle, stress response, ribosome biogenesis and in those bacteria that undergo differentiation, in morphogenesis control. This chain is GTPase Obg, found in Pelodictyon phaeoclathratiforme (strain DSM 5477 / BU-1).